The following is a 115-amino-acid chain: Large ribosomal subunit protein bL19 (115 aa).

The protein belongs to the bacterial ribosomal protein bL19 family.

This protein is located at the 30S-50S ribosomal subunit interface and may play a role in the structure and function of the aminoacyl-tRNA binding site. This is Large ribosomal subunit protein bL19 from Desulforamulus reducens (strain ATCC BAA-1160 / DSM 100696 / MI-1) (Desulfotomaculum reducens).